A 550-amino-acid polypeptide reads, in one-letter code: Parathyroid hormone 2 receptor (550 aa).

A signal peptide spans 1-24 (MAGLGASLHVWGWLMLGSCLLARA). Over 27–145 (DSDGTITIEE…GKQEFFERLY (119 aa)) the chain is Extracellular. N-linked (GlcNAc...) asparagine glycosylation is found at asparagine 51, asparagine 106, asparagine 116, and asparagine 121. The chain crosses the membrane as a helical span at residues 146–169 (VMYTVGYSISFGSLAVAILIIGYF). Residues 170 to 176 (RRLHCTR) are Cytoplasmic-facing. A helical membrane pass occupies residues 177–196 (NYIHMHLFVSFMLRATSIFV). Residues 197-237 (KDRVVHAHIGVKELESLIMQDDPQNSIEATSVDKSQYIGCK) lie on the Extracellular side of the membrane. A helical transmembrane segment spans residues 238–260 (IAVVMFIYFLATNYYWILVEGLY). Topologically, residues 261 to 275 (LHNLIFVAFFSDTKY) are cytoplasmic. The chain crosses the membrane as a helical span at residues 276-297 (LWGFILIGWGFPAAFVAAWAVA). Topologically, residues 298 to 316 (RATLADARCWELSAGDIKW) are extracellular. The helical transmembrane segment at 317–337 (IYQAPILAAIGLNFILFLNTV) threads the bilayer. The Cytoplasmic portion of the chain corresponds to 338-364 (RVLATKIWETNAVGHDTRKQYRKLAKS). Residues 365 to 383 (TLVLVLVFGVHYIVFVCLP) form a helical membrane-spanning segment. Topologically, residues 384-394 (HSFTGLGWEIR) are extracellular. A helical membrane pass occupies residues 395 to 417 (MHCELFFNSFQGFFVSIIYCYCN). The Cytoplasmic segment spans residues 418–550 (GEVQAEVKKM…GCQGETEDVL (133 aa)). Positions 511-531 (EETKEDSGRQGDDILMEKPSR) are enriched in basic and acidic residues. The tract at residues 511–550 (EETKEDSGRQGDDILMEKPSRPMESNPDTEGCQGETEDVL) is disordered.

Belongs to the G-protein coupled receptor 2 family. Binds to TIPF39/TIP39. Expressed abundantly in brain and pancreas. Also expressed in the testis.

Its subcellular location is the cell membrane. Its function is as follows. This is a specific receptor for parathyroid hormone. The activity of this receptor is mediated by G proteins which activate adenylyl cyclase. PTH2R may be responsible for PTH effects in a number of physiological systems. It may play a significant role in pancreatic function. PTH2R presence in neurons indicates that it may function as a neurotransmitter receptor. The polypeptide is Parathyroid hormone 2 receptor (PTH2R) (Homo sapiens (Human)).